A 204-amino-acid chain; its full sequence is CASP-like protein 1U3 (204 aa).

Over 1-19 (MCEGEKKKDSSSGALYCVN) the chain is Cytoplasmic. A helical transmembrane segment spans residues 20–40 (LALRIVVLGLAVAAAALMATA). Residues 41-63 (SQCTIFLYYGGPLHTITYKDFGP) are Extracellular-facing. The helical transmembrane segment at 64 to 84 (FVYLVVASSIGAFMEAIAIFL) threads the bilayer. The Cytoplasmic portion of the chain corresponds to 85–97 (TICKKKDGTPAKV). Residues 98-118 (LLPLLDAAVPVLLYSATAAAF) form a helical membrane-spanning segment. Residues 119 to 146 (AAGDMSYCAVGKRVGVCTTAAAGNFCNQ) are Extracellular-facing. A helical transmembrane segment spans residues 147-167 (VHIAMYVSLAAGVALLVAEIV). Residues 168–204 (KHWPDSGKKKEGGGGGCGSDSDSDKSTPCHHGCHSKH) are Cytoplasmic-facing. The interval 173–204 (SGKKKEGGGGGCGSDSDSDKSTPCHHGCHSKH) is disordered.

It belongs to the Casparian strip membrane proteins (CASP) family. In terms of assembly, homodimer and heterodimers.

Its subcellular location is the cell membrane. The chain is CASP-like protein 1U3 from Oryza sativa subsp. japonica (Rice).